The sequence spans 113 residues: TYRO protein tyrosine kinase-binding protein (113 aa).

An N-terminal signal peptide occupies residues 1-27 (MGGLEPCSRLLLLPLLLAVGGLRPVQA). Topologically, residues 28–40 (QAQSDCSCSTVSP) are extracellular. The helical transmembrane segment at 41-61 (GVLAGIVMGDLVLTVLIALAV) threads the bilayer. Residue Asp-50 participates in Ca(2+) binding. Topologically, residues 62-113 (YFLGRLVHRGRGAAEAATRKQRITETESPYQELQGQRSDVYSDLNMQRPYYK) are cytoplasmic. The tract at residues 75–113 (AEAATRKQRITETESPYQELQGQRSDVYSDLNMQRPYYK) is disordered. An ITAM domain is found at 80–108 (RKQRITETESPYQELQGQRSDVYSDLNMQ). Residues 87-100 (TESPYQELQGQRSD) are compositionally biased toward polar residues. Phosphotyrosine is present on residues Tyr-91 and Tyr-102.

Belongs to the TYROBP family. In terms of assembly, homodimer; disulfide-linked. Homotrimer; disulfide-linked. Homotetramer; disulfide-linked. Homotrimers and homotetramers form when low levels of partner receptors are available and is competitive with assembly with interacting receptors. They may represent alternative oligomerization states or may be intermediates in the receptor assembly process. Binding of a metal cation aids in homooligomerization through coordination of the metal ion by the subunits of the oligomer. Interacts with TREM1. Interacts with TREM2. Interacts with CLECSF5. Interacts with CD300LB and CD300C2. Interacts with CD300E. Interacts (via ITAM domain) with SYK (via SH2 domains); activates SYK mediating neutrophils and macrophages integrin-mediated activation. Interacts with KLRC2. Interacts with CD300H. Interacts with KLRD1. Interacts with SIGLEC1. In terms of processing, following ligand binding by associated receptors, tyrosine phosphorylated in the ITAM domain which leads to activation of additional tyrosine kinases and subsequent cell activation.

It is found in the cell membrane. Its function is as follows. Adapter protein which non-covalently associates with activating receptors found on the surface of a variety of immune cells to mediate signaling and cell activation following ligand binding by the receptors. TYROBP is tyrosine-phosphorylated in the ITAM domain following ligand binding by the associated receptors which leads to activation of additional tyrosine kinases and subsequent cell activation. Also has an inhibitory role in some cells. Non-covalently associates with activating receptors of the CD300 family to mediate cell activation. Also mediates cell activation through association with activating receptors of the CD200R family. Required for neutrophil activation mediated by integrin. Required for the activation of myeloid cells mediated by the CLEC5A/MDL1 receptor. Associates with natural killer (NK) cell receptors such as the KLRD1/KLRC2 heterodimer to mediate NK cell activation. Associates with TREM1 to mediate activation of neutrophils and monocytes. Associates with TREM2 on monocyte-derived dendritic cells to mediate up-regulation of chemokine receptor CCR7 and dendritic cell maturation and survival. Association with TREM2 mediates cytokine-induced formation of multinucleated giant cells which are formed by the fusion of macrophages. Stabilizes the TREM2 C-terminal fragment (TREM2-CTF) produced by TREM2 ectodomain shedding which suppresses the release of pro-inflammatory cytokines. In microglia, required with TREM2 for phagocytosis of apoptotic neurons. Required with ITGAM/CD11B in microglia to control production of microglial superoxide ions which promote the neuronal apoptosis that occurs during brain development. Promotes pro-inflammatory responses in microglia following nerve injury which accelerates degeneration of injured neurons. Positively regulates the expression of the IRAK3/IRAK-M kinase and IL10 production by liver dendritic cells and inhibits their T cell allosimulatory ability. Negatively regulates B cell proliferation. Required for CSF1-mediated osteoclast cytoskeletal organization. Positively regulates multinucleation during osteoclast development. In Pan troglodytes (Chimpanzee), this protein is TYRO protein tyrosine kinase-binding protein.